Reading from the N-terminus, the 126-residue chain is Small ribosomal subunit protein uS11 (126 aa).

Belongs to the universal ribosomal protein uS11 family. Part of the 30S ribosomal subunit. Interacts with proteins S7 and S18. Binds to IF-3.

Its function is as follows. Located on the platform of the 30S subunit, it bridges several disparate RNA helices of the 16S rRNA. Forms part of the Shine-Dalgarno cleft in the 70S ribosome. This Ehrlichia chaffeensis (strain ATCC CRL-10679 / Arkansas) protein is Small ribosomal subunit protein uS11.